A 514-amino-acid polypeptide reads, in one-letter code: Endogenous retrovirus group PABLB member 1 Env polyprotein (514 aa).

N58 is a glycosylation site (N-linked (GlcNAc...) asparagine). Residues 60 to 316 are surface protein; that stretch reads STSNVFLQWA…YPYLPHVVNQ (257 aa). The CXXC motif lies at 82-85; sequence CWVC. N-linked (GlcNAc...) asparagine glycosylation is found at N133, N140, N155, N218, N226, and N267. Residues 317–514 form a transmembrane protein region; the sequence is GTRAIVHRND…QRDIFHSNAP (198 aa). The interval 328–348 is fusion peptide; sequence LPTIFMPSVGLGTVIQHIEAL. N-linked (GlcNAc...) asparagine glycans are attached at residues N350 and N357. Residues 378–394 carry the CKS-17 motif; it reads LQNRMALDILTAAEGGT. C395 and C402 are oxidised to a cystine. Positions 395-403 match the CX6CC motif; sequence CALIKTECC. 2 N-linked (GlcNAc...) asparagine glycosylation sites follow: N408 and N412. A helical membrane pass occupies residues 452–472; that stretch reads ILIVLATLWSVGIALCCGLYF.

Belongs to the gamma type-C retroviral envelope protein family. HERV class-I R(b) env subfamily. In terms of processing, the CXXC motif is highly conserved across a broad range of retroviral envelope proteins. It is thought to participate in the formation of a labile disulfide bond possibly with the CX6CC motif present in the transmembrane domain. In terms of tissue distribution, low expression in placenta and testis.

Its subcellular location is the cell membrane. Its function is as follows. Retroviral envelope proteins mediate receptor recognition and membrane fusion during early infection. Endogenous envelope proteins may have kept, lost or modified their original function during evolution. This endogenous envelope protein has lost its original fusogenic properties. This Homo sapiens (Human) protein is Endogenous retrovirus group PABLB member 1 Env polyprotein (ERVPABLB-1).